The following is a 262-amino-acid chain: Ninja-family protein 3 (262 aa).

The segment at 48–69 is disordered; sequence RRNSLTCNTSKEAAGQSPEEMN.

Belongs to the Ninja family.

It localises to the nucleus. The polypeptide is Ninja-family protein 3 (Zea mays (Maize)).